A 426-amino-acid polypeptide reads, in one-letter code: MSRSKTRQGKLPALGWNTWNAFGCDIDATKIMTAANEVVNLGLKDLGYEYINIDDCWSVKSGRDASTQRIIPDPDKFPDGISGVADQIHDLGLKIGIYSSAGLTTCAGYPASLGYEDIDAQTFAEWGIDYLKYDNCGVPSNWTDTYTYCVPDPGSKATNGTCPDNKNPAPAGYDWRTSLTAERYRRMRDALVSVDRTILYSLCEWGQANVNDWGNETGNSWRTTGDITPSWPRIAAIANENSFLMNHVDFWGYPDPDMLEVGNGNLTLAENRAHFALWAAMKSPLIIGTALDSISQDHLAILSNKILLKFHQDPVIGRPAQPYKWGYNPDWTFDPAHPAEYWSGASSVLGGTLVLMLNSEDTTQRRTAVWKEVPELKDVLGRQGKRRIGFRVTDVWTGKDLGCVRDHYSVELESHDVAALVVGRAC.

The first 13 residues, 1–13, serve as a signal peptide directing secretion; sequence MSRSKTRQGKLPA. Disulfide bonds link Cys-24/Cys-56 and Cys-106/Cys-136. Asp-134 acts as the Nucleophile in catalysis. 2 N-linked (GlcNAc...) asparagine glycosylation sites follow: Asn-141 and Asn-159. 204–208 provides a ligand contact to substrate; the sequence is EWGQA. Asn-215 carries an N-linked (GlcNAc...) asparagine glycan. Asp-226 acts as the Proton donor in catalysis. N-linked (GlcNAc...) asparagine glycosylation occurs at Asn-265.

It belongs to the glycosyl hydrolase 27 family.

It is found in the secreted. The catalysed reaction is Hydrolysis of terminal, non-reducing alpha-D-galactose residues in alpha-D-galactosides, including galactose oligosaccharides, galactomannans and galactolipids.. Hydrolyzes a variety of simple alpha-D-galactoside as well as more complex molecules such as oligosaccharides and polysaccharides. This chain is Probable alpha-galactosidase B (aglB), found in Aspergillus fumigatus (strain CBS 144.89 / FGSC A1163 / CEA10) (Neosartorya fumigata).